The sequence spans 307 residues: Ribosomal RNA small subunit methyltransferase H (307 aa).

Residues 33-35 (GGY), Asp-51, Phe-78, Asp-96, and Gln-103 contribute to the S-adenosyl-L-methionine site.

This sequence belongs to the methyltransferase superfamily. RsmH family.

The protein localises to the cytoplasm. The catalysed reaction is cytidine(1402) in 16S rRNA + S-adenosyl-L-methionine = N(4)-methylcytidine(1402) in 16S rRNA + S-adenosyl-L-homocysteine + H(+). Specifically methylates the N4 position of cytidine in position 1402 (C1402) of 16S rRNA. The polypeptide is Ribosomal RNA small subunit methyltransferase H (Rickettsia conorii (strain ATCC VR-613 / Malish 7)).